Here is a 582-residue protein sequence, read N- to C-terminus: MSLFHLLRRSVTVAVMSESAPNHTSARRLTQPLEPFVGRQVLVGVSGGADSVGLLRALLAVGALPAVAHLDHALRPESVDDAAWVSDLCARLGVPCEVTRIDVGAVAARRNWNLEAARRLRYDVLSRAAKHSGAEVILTAHTRRDQAETVLMELLRGEGRIRGIPPQRGRVRRPWLNVGRAEIETYLRGLGQDWREDASNADPRFTRAWLRREVMPVLLTRFPAAETALAQVAELGAEDDAALQALAARLTPHTPLDRQPPAVLRRWLAAELRSGGLDFTAEQLRDLAGALNAGQTRHLTLPTGRDVTVTGGHLYTAPCDWPEPDFPLPPDWTRRTRQAGDRIRLAGGTRKLSDVLTDAHLPRAERDRVPLLTDEHGAVQWVGVQPPLWAVGARESLGLPADPLHAAMGEALALAQQAAERQEVPVGAVVLNADGEIVGRGRNTSREDGDMTCHAELAALREAAAGLGTPYLSDCTLVVTLEPCPMCLGAALEARIGHIVYGAANPKAGALGGVSDLLADHWGWRPTVQGGVRAGEAARLLREVFGEVRRRSADTPQTPNAETPAPRSSRSTSASGKPTMLE.

Position 46–51 (46–51) interacts with ATP; it reads SGGADS. Residues 402–525 enclose the CMP/dCMP-type deaminase domain; the sequence is DPLHAAMGEA…DLLADHWGWR (124 aa). Residues 548 to 582 are disordered; that stretch reads VRRRSADTPQTPNAETPAPRSSRSTSASGKPTMLE. Residues 563 to 575 show a composition bias toward low complexity; the sequence is TPAPRSSRSTSAS.

Belongs to the tRNA(Ile)-lysidine synthase family.

The protein localises to the cytoplasm. It catalyses the reaction cytidine(34) in tRNA(Ile2) + L-lysine + ATP = lysidine(34) in tRNA(Ile2) + AMP + diphosphate + H(+). Functionally, ligates lysine onto the cytidine present at position 34 of the AUA codon-specific tRNA(Ile) that contains the anticodon CAU, in an ATP-dependent manner. Cytidine is converted to lysidine, thus changing the amino acid specificity of the tRNA from methionine to isoleucine. The polypeptide is tRNA(Ile)-lysidine synthase (Deinococcus radiodurans (strain ATCC 13939 / DSM 20539 / JCM 16871 / CCUG 27074 / LMG 4051 / NBRC 15346 / NCIMB 9279 / VKM B-1422 / R1)).